We begin with the raw amino-acid sequence, 213 residues long: Methylthioribulose-1-phosphate dehydratase (213 aa).

2 residues coordinate Zn(2+): His-104 and His-106.

Belongs to the aldolase class II family. MtnB subfamily. It depends on Zn(2+) as a cofactor.

It carries out the reaction 5-(methylsulfanyl)-D-ribulose 1-phosphate = 5-methylsulfanyl-2,3-dioxopentyl phosphate + H2O. It participates in amino-acid biosynthesis; L-methionine biosynthesis via salvage pathway; L-methionine from S-methyl-5-thio-alpha-D-ribose 1-phosphate: step 2/6. Its function is as follows. Catalyzes the dehydration of methylthioribulose-1-phosphate (MTRu-1-P) into 2,3-diketo-5-methylthiopentyl-1-phosphate (DK-MTP-1-P). The protein is Methylthioribulose-1-phosphate dehydratase of Stenotrophomonas maltophilia (strain R551-3).